We begin with the raw amino-acid sequence, 407 residues long: Lysosomal phospholipase A and acyltransferase (407 aa).

The first 29 residues, M1–A29, serve as a signal peptide directing secretion. D41 provides a ligand contact to substrate. C60 and C84 are disulfide-bonded. The N-linked (GlcNAc...) asparagine glycan is linked to N94. S193 (acyl-ester intermediate) is an active-site residue. S193 serves as a coordination point for Zn(2+). M194 is a substrate binding site. N284 carries an N-linked (GlcNAc...) asparagine glycan. Catalysis depends on charge relay system residues D355 and H387. Zn(2+) is bound at residue H387. A glycan (N-linked (GlcNAc...) asparagine) is linked at N393.

This sequence belongs to the AB hydrolase superfamily. Lipase family. N-glycosylated. Post-translationally, N-glycosylated. N-glycosylation is important for maturation of the enzyme and normal subcellular location. Detected in brain (at protein level).

It is found in the lysosome. It localises to the secreted. Its subcellular location is the membrane. It carries out the reaction a 1,2-diacyl-sn-glycero-3-phosphocholine + H2O = a 2-acyl-sn-glycero-3-phosphocholine + a fatty acid + H(+). The enzyme catalyses 1-hexadecanoyl-2-(9Z-octadecenoyl)-sn-glycero-3-phosphocholine + H2O = 2-(9Z-octadecenoyl)-sn-glycero-3-phosphocholine + hexadecanoate + H(+). It catalyses the reaction 1,2-di-(9Z-octadecenoyl)-sn-glycero-3-phosphocholine + H2O = 2-(9Z-octadecenoyl)-sn-glycero-3-phosphocholine + (9Z)-octadecenoate + H(+). The catalysed reaction is 1-hexadecanoyl-2-glutaroyl-sn-glycero-3-phosphocholine + H2O = 2-glutaroyl-sn-glycero-3-phosphocholine + hexadecanoate + H(+). It carries out the reaction 1-hexadecanoyl-2-nonadioyl-sn-glycero-3-phosphocholine + H2O = 2-nonadioyl-sn-glycero-3-phosphocholine + hexadecanoate + H(+). The enzyme catalyses 1-hexadecanoyl-2-(5-oxopentanoyl)-sn-glycero-3-phosphocholine + H2O = 2-(5-oxopentanoyl)-sn-glycero-3-phosphocholine + hexadecanoate + H(+). It catalyses the reaction 1-hexadecanoyl-2-(9-oxononanoyl)-sn-glycero-3-phosphocholine + H2O = 2-(9-oxononanoyl)-sn-glycero-3-phosphocholine + hexadecanoate + H(+). The catalysed reaction is 1,2-dihexadecanoyl-sn-glycero-3-phosphocholine + H2O = 2-hexadecanoyl-sn-glycero-3-phosphocholine + hexadecanoate + H(+). It carries out the reaction a 1,2-diacyl-sn-glycero-3-phosphocholine + H2O = a 1-acyl-sn-glycero-3-phosphocholine + a fatty acid + H(+). The enzyme catalyses 1-hexadecanoyl-2-(9Z-octadecenoyl)-sn-glycero-3-phosphocholine + H2O = 1-hexadecanoyl-sn-glycero-3-phosphocholine + (9Z)-octadecenoate + H(+). It catalyses the reaction 1,2-di-(9Z-octadecenoyl)-sn-glycero-3-phosphocholine + H2O = 1-(9Z-octadecenoyl)-sn-glycero-3-phosphocholine + (9Z)-octadecenoate + H(+). The catalysed reaction is 1,2-dihexadecanoyl-sn-glycero-3-phosphocholine + H2O = 1-hexadecanoyl-sn-glycero-3-phosphocholine + hexadecanoate + H(+). It carries out the reaction a 1-acyl-sn-glycero-3-phosphocholine + H2O = sn-glycerol 3-phosphocholine + a fatty acid + H(+). The enzyme catalyses 1-hexadecanoyl-sn-glycero-3-phosphocholine + H2O = sn-glycerol 3-phosphocholine + hexadecanoate + H(+). It catalyses the reaction N-(acetyl)-sphing-4-enine + a 1,2-diacyl-sn-glycero-3-phosphoethanolamine = 1-O-acyl-N-(acetyl)-sphing-4-enine + a 2-acyl-sn-glycero-3-phosphoethanolamine. The catalysed reaction is 1-hexadecanoyl-2-(9Z-octadecenoyl)-sn-glycero-3-phosphoethanolamine + N-(acetyl)-sphing-4-enine = 2-(9Z-octadecenoyl)-sn-glycero-3-phosphoethanolamine + 1-hexadecanoyl-N-(acetyl)-sphing-4-enine. It carries out the reaction 1-hexadecanoyl-2-(9Z,12Z-octadecadienoyl)-sn-glycero-3-phosphoethanolamine + N-(acetyl)-sphing-4-enine = 2-(9Z,12Z)-octadecadienoyl-sn-glycero-3-phosphoethanolamine + 1-hexadecanoyl-N-(acetyl)-sphing-4-enine. The enzyme catalyses 1-hexadecanoyl-2-(5Z,8Z,11Z,14Z-eicosatetraenoyl)-sn-glycero-3-phosphoethanolamine + N-(acetyl)-sphing-4-enine = 2-(5Z,8Z,11Z,14Z)-eicosatetraenoyl-sn-glycero-3-phosphoethanolamine + 1-hexadecanoyl-N-(acetyl)-sphing-4-enine. It catalyses the reaction N-(acetyl)-sphing-4-enine + a 1,2-diacyl-sn-glycero-3-phosphoethanolamine = 1-O-acyl-N-(acetyl)-sphing-4-enine + a 1-acyl-sn-glycero-3-phosphoethanolamine. The catalysed reaction is 1-hexadecanoyl-2-(9Z-octadecenoyl)-sn-glycero-3-phosphoethanolamine + N-(acetyl)-sphing-4-enine = 1-(9Z-octadecenoyl)-N-(acetyl)-sphing-4-enine + 1-hexadecanoyl-sn-glycero-3-phosphoethanolamine. It carries out the reaction 1-hexadecanoyl-2-(9Z,12Z-octadecadienoyl)-sn-glycero-3-phosphoethanolamine + N-(acetyl)-sphing-4-enine = 1-(9Z,12Z-octadecadienoyl)-N-acetylsphing-4-enine + 1-hexadecanoyl-sn-glycero-3-phosphoethanolamine. The enzyme catalyses 1-hexadecanoyl-2-(5Z,8Z,11Z,14Z-eicosatetraenoyl)-sn-glycero-3-phosphoethanolamine + N-(acetyl)-sphing-4-enine = 1-(5Z,8Z,11Z,14Z)-eicosatetraenoyl-N-(acetyl)-sphing-4-enine + 1-hexadecanoyl-sn-glycero-3-phosphoethanolamine. It catalyses the reaction N-(acetyl)-sphing-4-enine + a 1,2-diacyl-sn-glycero-3-phosphocholine = 1-O-acyl-N-(acetyl)-sphing-4-enine + a 2-acyl-sn-glycero-3-phosphocholine. The catalysed reaction is 1-hexadecanoyl-2-(9Z-octadecenoyl)-sn-glycero-3-phosphocholine + N-(acetyl)-sphing-4-enine = 1-hexadecanoyl-N-(acetyl)-sphing-4-enine + 2-(9Z-octadecenoyl)-sn-glycero-3-phosphocholine. It carries out the reaction 1-hexadecanoyl-2-(9Z,12Z-octadecadienoyl)-sn-glycero-3-phosphocholine + N-(acetyl)-sphing-4-enine = 2-(9Z,12Z-octadecadienoyl)-sn-glycero-3-phosphocholine + 1-hexadecanoyl-N-(acetyl)-sphing-4-enine. The enzyme catalyses 1-hexadecanoyl-2-(5Z,8Z,11Z,14Z-eicosatetraenoyl)-sn-glycero-3-phosphocholine + N-(acetyl)-sphing-4-enine = 1-hexadecanoyl-N-(acetyl)-sphing-4-enine + 2-(5Z,8Z,11Z,14Z)-eicosatetraenoyl-sn-glycero-3-phosphocholine. It catalyses the reaction 1-hexadecanoyl-2-(4Z,7Z,10Z,13Z,16Z,19Z-docosahexaenoyl)-sn-glycero-3-phosphocholine + N-(acetyl)-sphing-4-enine = 2-(4Z,7Z,10Z,13Z,16Z,19Z-docosahexaenoyl)-sn-glycero-3-phosphocholine + 1-hexadecanoyl-N-(acetyl)-sphing-4-enine. The catalysed reaction is 1-hexadecanoyl-2-nonadioyl-sn-glycero-3-phosphocholine + N-(acetyl)-sphing-4-enine = 2-nonadioyl-sn-glycero-3-phosphocholine + 1-hexadecanoyl-N-(acetyl)-sphing-4-enine. It carries out the reaction 1-octadecanoyl-2-(9Z-octadecenoyl)-sn-glycero-3-phosphocholine + N-(acetyl)-sphing-4-enine = 1-octadecanoyl-N-(acetyl)-sphing-4-enine + 2-(9Z-octadecenoyl)-sn-glycero-3-phosphocholine. The enzyme catalyses 1-(9Z)-octadecenoyl-2-octadecanoyl-sn-glycero-3-phosphocholine + N-(acetyl)-sphing-4-enine = 2-octadecanoyl-sn-glycero-3-phosphocholine + 1-(9Z-octadecenoyl)-N-(acetyl)-sphing-4-enine. It catalyses the reaction 1-octadecanoyl-2-(5Z,8Z,11Z,14Z-eicosatetraenoyl)-sn-glycero-3-phosphocholine + N-(acetyl)-sphing-4-enine = 1-octadecanoyl-N-(acetyl)-sphing-4-enine + 2-(5Z,8Z,11Z,14Z)-eicosatetraenoyl-sn-glycero-3-phosphocholine. The catalysed reaction is 1-(9Z-octadecenoyl)-2-hexadecanoyl-sn-glycero-3-phosphocholine + N-(acetyl)-sphing-4-enine = 1-(9Z-octadecenoyl)-N-(acetyl)-sphing-4-enine + 2-hexadecanoyl-sn-glycero-3-phosphocholine. It carries out the reaction N-(acetyl)-sphing-4-enine + a 1,2-diacyl-sn-glycero-3-phosphocholine = 1-O-acyl-N-(acetyl)-sphing-4-enine + a 1-acyl-sn-glycero-3-phosphocholine. The enzyme catalyses 1-hexadecanoyl-2-(9Z-octadecenoyl)-sn-glycero-3-phosphocholine + N-(acetyl)-sphing-4-enine = 1-(9Z-octadecenoyl)-N-(acetyl)-sphing-4-enine + 1-hexadecanoyl-sn-glycero-3-phosphocholine. It catalyses the reaction 1-hexadecanoyl-2-(9Z,12Z-octadecadienoyl)-sn-glycero-3-phosphocholine + N-(acetyl)-sphing-4-enine = 1-(9Z,12Z-octadecadienoyl)-N-acetylsphing-4-enine + 1-hexadecanoyl-sn-glycero-3-phosphocholine. The catalysed reaction is 1-hexadecanoyl-2-(5Z,8Z,11Z,14Z-eicosatetraenoyl)-sn-glycero-3-phosphocholine + N-(acetyl)-sphing-4-enine = 1-(5Z,8Z,11Z,14Z)-eicosatetraenoyl-N-(acetyl)-sphing-4-enine + 1-hexadecanoyl-sn-glycero-3-phosphocholine. It carries out the reaction 1-hexadecanoyl-2-(4Z,7Z,10Z,13Z,16Z,19Z-docosahexaenoyl)-sn-glycero-3-phosphocholine + N-(acetyl)-sphing-4-enine = 1-(4Z,7Z,10Z,13Z,16Z,19Z-docosahexaenoyl)-N-(acetyl)-sphing-4-enine + 1-hexadecanoyl-sn-glycero-3-phosphocholine. The enzyme catalyses 1-octadecanoyl-2-(9Z-octadecenoyl)-sn-glycero-3-phosphocholine + N-(acetyl)-sphing-4-enine = 1-(9Z-octadecenoyl)-N-(acetyl)-sphing-4-enine + 1-octadecanoyl-sn-glycero-3-phosphocholine. It catalyses the reaction 1-octadecanoyl-2-(9Z,12Z)-octadecadienoyl-sn-glycero-3-phosphocholine + N-(acetyl)-sphing-4-enine = 1-(9Z,12Z-octadecadienoyl)-N-acetylsphing-4-enine + 1-octadecanoyl-sn-glycero-3-phosphocholine. The catalysed reaction is 1-(9Z-octadecenoyl)-2-hexadecanoyl-sn-glycero-3-phosphocholine + N-(acetyl)-sphing-4-enine = 1-hexadecanoyl-N-(acetyl)-sphing-4-enine + 1-(9Z-octadecenoyl)-sn-glycero-3-phosphocholine. It carries out the reaction 1-(9Z)-octadecenoyl-2-octadecanoyl-sn-glycero-3-phosphocholine + N-(acetyl)-sphing-4-enine = 1-octadecanoyl-N-(acetyl)-sphing-4-enine + 1-(9Z-octadecenoyl)-sn-glycero-3-phosphocholine. The enzyme catalyses 1,2-di-(9Z-octadecenoyl)-sn-glycero-3-phosphocholine + N-(acetyl)-sphing-4-enine = 1-(9Z-octadecenoyl)-N-(acetyl)-sphing-4-enine + 1-(9Z-octadecenoyl)-sn-glycero-3-phosphocholine. It catalyses the reaction 1-octadecanoyl-2-(5Z,8Z,11Z,14Z-eicosatetraenoyl)-sn-glycero-3-phosphocholine + N-(acetyl)-sphing-4-enine = 1-(5Z,8Z,11Z,14Z)-eicosatetraenoyl-N-(acetyl)-sphing-4-enine + 1-octadecanoyl-sn-glycero-3-phosphocholine. The catalysed reaction is a 1,2-diacyl-sn-glycero-3-phospho-L-serine + N-(acetyl)-sphing-4-enine = a 2-acyl-sn-glycero-3-phospho-L-serine + 1-O-acyl-N-(acetyl)-sphing-4-enine. It carries out the reaction 1-octadecanoyl-2-(9Z-octadecenoyl)-sn-glycero-3-phospho-L-serine + N-(acetyl)-sphing-4-enine = 2-(9Z-octadecenoyl)-sn-glycero-3-phospho-L-serine + 1-octadecanoyl-N-(acetyl)-sphing-4-enine. The enzyme catalyses a 1,2-diacyl-sn-glycero-3-phospho-L-serine + N-(acetyl)-sphing-4-enine = 1-O-acyl-N-(acetyl)-sphing-4-enine + a 1-acyl-sn-glycero-3-phospho-L-serine. It catalyses the reaction 1-octadecanoyl-2-(9Z-octadecenoyl)-sn-glycero-3-phospho-L-serine + N-(acetyl)-sphing-4-enine = 1-octadecanoyl-sn-glycero-3-phosphoserine + 1-(9Z-octadecenoyl)-N-(acetyl)-sphing-4-enine. The catalysed reaction is a 1,2-diacyl-sn-glycero-3-phospho-(1'-sn-glycerol) + N-(acetyl)-sphing-4-enine = 2-acyl-sn-glycero-3-phospho-(1'-sn-glycerol) + 1-O-acyl-N-(acetyl)-sphing-4-enine. It carries out the reaction 1-octadecanoyl-2-(9Z-octadecenoyl)-sn-glycero-3-phospho-(1'-sn-glycerol) + N-(acetyl)-sphing-4-enine = 2-(9Z-octadecenoyl)-sn-glycero-3-phospho-(1'-sn-glycerol) + 1-octadecanoyl-N-(acetyl)-sphing-4-enine. The enzyme catalyses a 1,2-diacyl-sn-glycero-3-phospho-(1'-sn-glycerol) + N-(acetyl)-sphing-4-enine = 1-O-acyl-N-(acetyl)-sphing-4-enine + 1-acyl-sn-glycero-3-phospho-(1'-sn-glycerol). It catalyses the reaction 1-octadecanoyl-2-(9Z-octadecenoyl)-sn-glycero-3-phospho-(1'-sn-glycerol) + N-(acetyl)-sphing-4-enine = 1-octadecanoyl-sn-glycero-3-phospho-(1'-sn-glycerol) + 1-(9Z-octadecenoyl)-N-(acetyl)-sphing-4-enine. The catalysed reaction is an N-acylethanolamine + a 1,2-diacyl-sn-glycero-3-phosphocholine = 2-(acylamino)ethyl fatty acid + a 2-acyl-sn-glycero-3-phosphocholine. It carries out the reaction an N-acylethanolamine + a 1,2-diacyl-sn-glycero-3-phosphocholine = 2-(acylamino)ethyl fatty acid + a 1-acyl-sn-glycero-3-phosphocholine. The enzyme catalyses N-(5Z,8Z,11Z,14Z-eicosatetraenoyl)-ethanolamine + 1,2-di-(9Z-octadecenoyl)-sn-glycero-3-phosphocholine = 2-[(5Z,8Z,11Z,14Z)-eicosatetraenoylamino]ethyl (9Z)-octadecenoate + (9Z-octadecenoyl)-sn-glycero-3-phosphocholine. It catalyses the reaction N-(9Z-octadecenoyl) ethanolamine + 1,2-di-(9Z-octadecenoyl)-sn-glycero-3-phosphocholine = 2-[(9Z)-octadecenoylamino]ethyl (9Z)-octadecenoate + (9Z-octadecenoyl)-sn-glycero-3-phosphocholine. The catalysed reaction is a 3-acyl-sn-glycerol + a 1,2-diacyl-sn-glycero-3-phosphocholine = a 1,3-diacylglycerol + a 1-acyl-sn-glycero-3-phosphocholine. It carries out the reaction a 3-acyl-sn-glycerol + a 1,2-diacyl-sn-glycero-3-phosphocholine = a 1,3-diacylglycerol + a 2-acyl-sn-glycero-3-phosphocholine. The enzyme catalyses 3-(9Z-octadecenoyl)-sn-glycerol + 1,2-di-(9Z-octadecenoyl)-sn-glycero-3-phosphocholine = 1,3-di-(9Z-octadecenoyl)-glycerol + (9Z-octadecenoyl)-sn-glycero-3-phosphocholine. It catalyses the reaction 3-hexadecanoyl-sn-glycerol + 1,2-di-(9Z-octadecenoyl)-sn-glycero-3-phosphocholine = 1-(9Z)-octadecenoyl-3-hexadecanoyl-sn-glycerol + (9Z-octadecenoyl)-sn-glycero-3-phosphocholine. The catalysed reaction is a 1-acyl-sn-glycerol + a 1,2-diacyl-sn-glycero-3-phosphocholine = a 1,3-diacylglycerol + a 2-acyl-sn-glycero-3-phosphocholine. It carries out the reaction a 1-acyl-sn-glycerol + a 1,2-diacyl-sn-glycero-3-phosphocholine = a 1,3-diacylglycerol + a 1-acyl-sn-glycero-3-phosphocholine. The enzyme catalyses 1-(9Z-octadecenoyl)-sn-glycerol + 1,2-di-(9Z-octadecenoyl)-sn-glycero-3-phosphocholine = 1,3-di-(9Z-octadecenoyl)-glycerol + (9Z-octadecenoyl)-sn-glycero-3-phosphocholine. It catalyses the reaction 1-hexadecanoyl-sn-glycerol + 1,2-di-(9Z-octadecenoyl)-sn-glycero-3-phosphocholine = 1-hexadecanoyl-3-(9Z)-octadecenoyl-sn-glycerol + (9Z-octadecenoyl)-sn-glycero-3-phosphocholine. The catalysed reaction is a 2-acylglycerol + a 1,2-diacyl-sn-glycero-3-phosphocholine = a 1,2-diacylglycerol + a 2-acyl-sn-glycero-3-phosphocholine. It carries out the reaction a 2-acylglycerol + a 1,2-diacyl-sn-glycero-3-phosphocholine = a 1,2-diacylglycerol + a 1-acyl-sn-glycero-3-phosphocholine. The enzyme catalyses 2-hexadecanoylglycerol + 1,2-di-(9Z-octadecenoyl)-sn-glycero-3-phosphocholine = 1-(9Z)-octadecenoyl-2-hexadecanoylglycerol + (9Z-octadecenoyl)-sn-glycero-3-phosphocholine. It catalyses the reaction 1-O-alkylglycerol + a 1,2-diacyl-sn-glycero-3-phosphocholine = 1-O-alkyl-3-acylglycerol + a 1-acyl-sn-glycero-3-phosphocholine. The catalysed reaction is 1-O-alkylglycerol + a 1,2-diacyl-sn-glycero-3-phosphocholine = 1-O-alkyl-3-acylglycerol + a 2-acyl-sn-glycero-3-phosphocholine. It carries out the reaction 1-O-hexadecylglycerol + 1,2-di-(9Z-octadecenoyl)-sn-glycero-3-phosphocholine = 1-O-hexadecyl-3-(9Z)-octadecenoylglycerol + (9Z-octadecenoyl)-sn-glycero-3-phosphocholine. The enzyme catalyses 1-O-alkyl-2-acyl-sn-glycerol + a 1,2-diacyl-sn-glycero-3-phosphocholine = 1-O-alkyl-2,3-diacyl-sn-glycerol + a 2-acyl-sn-glycero-3-phosphocholine. It catalyses the reaction 1-O-alkyl-2-acyl-sn-glycerol + a 1,2-diacyl-sn-glycero-3-phosphocholine = 1-O-alkyl-2,3-diacyl-sn-glycerol + a 1-acyl-sn-glycero-3-phosphocholine. The catalysed reaction is 1-O-hexadecyl-2-acetyl-sn-glycerol + 1,2-di-(9Z-octadecenoyl)-sn-glycero-3-phosphocholine = 1-O-hexadecyl-2-acetyl-3-(9Z)-octadecenoyl-sn-glycerol + (9Z-octadecenoyl)-sn-glycero-3-phosphocholine. It carries out the reaction 1-O-hexadecyl-2-O-methyl-sn-glycerol + 1,2-di-(9Z-octadecenoyl)-sn-glycero-3-phosphocholine = 1-O-hexadecyl-2-O-methyl-3-(9Z)-octadecenoyl-sn-glycerol + (9Z-octadecenoyl)-sn-glycero-3-phosphocholine. The enzyme catalyses a 1,2-diacyl-sn-glycero-3-phosphoethanolamine + H2O = a 1-acyl-sn-glycero-3-phosphoethanolamine + a fatty acid + H(+). It catalyses the reaction 1-acyl-2-(5Z,8Z,11Z,14Z)-eicosatetraenoyl-sn-glycero-3-phosphoethanolamine + H2O = a 1-acyl-sn-glycero-3-phosphoethanolamine + (5Z,8Z,11Z,14Z)-eicosatetraenoate + H(+). The catalysed reaction is a 1,2-diacyl-sn-glycero-3-phospho-(1'-sn-glycerol) + H2O = 1-acyl-sn-glycero-3-phospho-(1'-sn-glycerol) + a fatty acid + H(+). It carries out the reaction 1-hexadecanoyl-2-(9Z-octadecenoyl)-sn-glycero-3-phospho-(1'-sn-glycerol) + H2O = 1-hexadecanoyl-sn-glycero-3-phospho-(1'-sn-glycerol) + (9Z)-octadecenoate + H(+). The enzyme catalyses a 1,2-diacyl-sn-glycero-3-phospho-(1'-sn-glycerol) + H2O = 2-acyl-sn-glycero-3-phospho-(1'-sn-glycerol) + a fatty acid + H(+). It catalyses the reaction 1-hexadecanoyl-2-(9Z-octadecenoyl)-sn-glycero-3-phospho-(1'-sn-glycerol) + H2O = 2-(9Z-octadecenoyl)-sn-glycero-3-phospho-(1'-sn-glycerol) + hexadecanoate + H(+). Its activity is regulated as follows. Transacylase activity is completely inhibited by Triton X-100 and partially inhibited by heparin. Moderately activated by Mg(2+) and Ca(2+). Functionally, has dual calcium-independent phospholipase and O-acyltransferase activities with a potential role in glycerophospholipid homeostasis and remodeling of acyl groups of lipophilic alcohols present in acidic cellular compartments. Catalyzes hydrolysis of the ester bond of the fatty acyl group attached at sn-1 or sn-2 position of phospholipids (phospholipase A1 or A2 activity) and transfer it to the hydroxyl group at the first carbon of lipophilic alcohols (O-acyltransferase activity). Among preferred fatty acyl donors are phosphatidylcholines, phosphatidylethanolamines, phosphatidylglycerols and phosphatidylserines. Favors sn-2 over sn-1 deacylation of unsaturated fatty acyl groups of phosphatidylcholines, phosphatidylethanolamines, and phosphatidylglycerols. Among preferred fatty acyl acceptors are natural lipophilic alcohols including short-chain ceramide N-acetyl-sphingosine (C2 ceramide), alkylacylglycerols, monoacylglycerols, and acylethanolamides such as anandamide and oleoylethanolamide. Selectively hydrolyzes the sn-1 fatty acyl group of truncated oxidized phospholipids and may play a role in detoxification of reactive oxidized phospholipids during oxidative stress. Required for normal phospholipid degradation in alveolar macrophages with potential implications in the clearance of pulmonary surfactant, which is mainly composed of dipalmitoylphosphatidylcholine (1,2-dihexadecanoyl-sn-glycero-3-phosphocholine). Involved in the first step of bis(monoacylglycero)phosphate (BMP) de novo synthesis from phosphatidylglycerol (1,2-diacyl-sn-glycero-3-phospho-(1'-sn-glycerol), PG). BMP is an important player in cargo sorting and degradation, regulation of cellular cholesterol levels and intercellular communication. At neutral pH, hydrolyzes the sn-1 fatty acyl group of the lysophosphatidylcholines. The sequence is that of Lysosomal phospholipase A and acyltransferase (PLA2G15) from Bos taurus (Bovine).